The sequence spans 616 residues: Chaperone protein HscA homolog (616 aa).

This sequence belongs to the heat shock protein 70 family.

Its function is as follows. Chaperone involved in the maturation of iron-sulfur cluster-containing proteins. Has a low intrinsic ATPase activity which is markedly stimulated by HscB. This is Chaperone protein HscA homolog from Mannheimia succiniciproducens (strain KCTC 0769BP / MBEL55E).